Reading from the N-terminus, the 240-residue chain is ATP-dependent dethiobiotin synthetase BioD (240 aa).

Position 15 to 20 (15 to 20 (EIGKTF)) interacts with ATP. Mg(2+) is bound at residue threonine 19. Residue lysine 40 is part of the active site. Residues aspartate 57, 118 to 121 (EGVG), and 178 to 179 (NR) contribute to the ATP site. 2 residues coordinate Mg(2+): aspartate 57 and glutamate 118.

It belongs to the dethiobiotin synthetase family. In terms of assembly, homodimer. The cofactor is Mg(2+).

The protein localises to the cytoplasm. It catalyses the reaction (7R,8S)-7,8-diammoniononanoate + CO2 + ATP = (4R,5S)-dethiobiotin + ADP + phosphate + 3 H(+). Its pathway is cofactor biosynthesis; biotin biosynthesis; biotin from 7,8-diaminononanoate: step 1/2. In terms of biological role, catalyzes a mechanistically unusual reaction, the ATP-dependent insertion of CO2 between the N7 and N8 nitrogen atoms of 7,8-diaminopelargonic acid (DAPA, also called 7,8-diammoniononanoate) to form a ureido ring. The sequence is that of ATP-dependent dethiobiotin synthetase BioD from Burkholderia pseudomallei (strain 1106a).